The primary structure comprises 463 residues: T-box transcription factor TBX1-B (463 aa).

Disordered stretches follow at residues 39 to 58 and 75 to 102; these read SPSPGDPYSQHEPHYEPCSA and GASSSSCASSTPGSGSTGSSSGNKAPVK. The segment covering 75–96 has biased composition (low complexity); sequence GASSSSCASSTPGSGSTGSSSG. A DNA-binding region (T-box) is located at residues 119-297; the sequence is LWDEFNQLGT…SNPFAKGFRD (179 aa). Disordered stretches follow at residues 320 to 343 and 367 to 406; these read RSRNPVSSPPQNGSDKDGDGRREY and SPSLPVPGGLVPLSTGRPSPPHELRLDPHSQGSEPLHHHP. A compositionally biased stretch (polar residues) spans 323–332; that stretch reads NPVSSPPQNG. A compositionally biased stretch (basic and acidic residues) spans 333 to 343; that stretch reads SDKDGDGRREY. The segment covering 367 to 380 has biased composition (low complexity); the sequence is SPSLPVPGGLVPLS. A Nuclear localization signal motif is present at residues 420-431; sequence KTRPAPYPLPSI.

Binds DNA as a dimer. Interacts with dscr6/ripply3.

It is found in the nucleus. Its function is as follows. Probable transcriptional regulator involved in developmental processes. Binds to the palindromic T site 5'-TTCACACCTAGGTGTGAA-3' DNA sequence. Induces pre-placodal ectoderm (PPE) gene expression in regions where RIPPLY3 is absent. Plays a role in the formation of the anteroposterior (AP) axis during embryonic development; required to establish the posterolateral border of the pre-placodal ectoderm (PPE) acting downstream of the retinoic acid receptor (RAR) signaling. In terms of biological role, probable transcriptional regulator involved in developmental processes. Binds to the palindromic T site 5'-TTCACACCTAGGTGTGAA-3' DNA sequence. Is required for normal development of the pharyngeal arch arteries. This Xenopus laevis (African clawed frog) protein is T-box transcription factor TBX1-B (tbx1-b).